The chain runs to 869 residues: Valine--tRNA ligase (869 aa).

The 'HIGH' region signature appears at 51-61; sequence PNVTGNLHLGH. The 'KMSKS' region signature appears at 523–527; the sequence is KMSKS. K526 is a binding site for ATP. The stretch at 797–869 forms a coiled coil; sequence EDLLGSNNEA…ELEKLLSSHK (73 aa).

This sequence belongs to the class-I aminoacyl-tRNA synthetase family. ValS type 1 subfamily. As to quaternary structure, monomer.

The protein resides in the cytoplasm. The catalysed reaction is tRNA(Val) + L-valine + ATP = L-valyl-tRNA(Val) + AMP + diphosphate. Functionally, catalyzes the attachment of valine to tRNA(Val). As ValRS can inadvertently accommodate and process structurally similar amino acids such as threonine, to avoid such errors, it has a 'posttransfer' editing activity that hydrolyzes mischarged Thr-tRNA(Val) in a tRNA-dependent manner. In Malacoplasma penetrans (strain HF-2) (Mycoplasma penetrans), this protein is Valine--tRNA ligase.